The primary structure comprises 359 residues: 3-dehydroquinate synthase (359 aa).

Residues 69 to 74 (DGEAYK), 103 to 107 (GVIGD), 127 to 128 (TT), Lys-140, Lys-149, and 167 to 170 (CLKT) contribute to the NAD(+) site. Glu-182, His-245, and His-262 together coordinate Zn(2+).

Belongs to the sugar phosphate cyclases superfamily. Dehydroquinate synthase family. The cofactor is Co(2+). It depends on Zn(2+) as a cofactor. NAD(+) is required as a cofactor.

The protein resides in the cytoplasm. It catalyses the reaction 7-phospho-2-dehydro-3-deoxy-D-arabino-heptonate = 3-dehydroquinate + phosphate. It functions in the pathway metabolic intermediate biosynthesis; chorismate biosynthesis; chorismate from D-erythrose 4-phosphate and phosphoenolpyruvate: step 2/7. Its function is as follows. Catalyzes the conversion of 3-deoxy-D-arabino-heptulosonate 7-phosphate (DAHP) to dehydroquinate (DHQ). In Aeromonas salmonicida (strain A449), this protein is 3-dehydroquinate synthase.